Reading from the N-terminus, the 1704-residue chain is Phospholipid-transporting ATPase ABCA3 (1704 aa).

Residue Asn-14 is glycosylated (N-linked (GlcNAc...) asparagine). Residues 22 to 42 traverse the membrane as a helical segment; that stretch reads VLVTVLELFLPLLFSGILIWL. Residues Asn-53, Asn-124, Asn-140, and Asn-228 are each glycosylated (N-linked (GlcNAc...) asparagine). A run of 6 helical transmembrane segments spans residues 261 to 283, 307 to 327, 344 to 364, 373 to 393, 405 to 425, and 447 to 467; these read YQLP…RAVV, AWFL…TLLF, SLVL…SFMV, IAAA…FFVA, LLSC…IGKF, and FCFG…GLVT. Positions 530-763 constitute an ABC transporter 1 domain; it reads IKIKHLSKVF…YGAGYHMTLV (234 aa). 566 to 573 contacts ATP; that stretch reads GHNGAGKT. An N-linked (GlcNAc...) asparagine glycan is attached at Asn-620. The next 7 helical transmembrane spans lie at 925–945, 1100–1120, 1144–1164, 1183–1203, 1213–1233, 1245–1265, and 1310–1330; these read MVAA…LAIH, IALN…ILAV, SALL…LVVF, LLLM…SFFF, LTIF…IMRI, LDHV…SNFY, and MAAS…NLLW. The N-linked (GlcNAc...) asparagine glycan is linked to Asn-1350. The ABC transporter 2 domain maps to 1381 to 1614; the sequence is LIINELSKVY…FGSGYSLQAK (234 aa). Residue 1416–1423 coordinates ATP; it reads GFNGAGKT.

Belongs to the ABC transporter superfamily. ABCA family. As to quaternary structure, homooligomer; disulfide-linked. In terms of processing, N-glycosylated. Localization at intracellular vesicles is accompanied by processing of oligosaccharide from high mannose type to complex type. N-linked glycosylation at Asn-124 and Asn-140 is required for stability and efficient anterograde trafficking and prevents from proteasomal degradation. Post-translationally, proteolytically cleaved by CTSL and to a lower extent by CTSB within multivesicular bodies (MVB) and lamellar bodies (LB) leading to a mature form of 150 kDa. As to expression, highly expressed in the lung and moderately expressed in the kidney, adipose, macrophage, and spleen.

It is found in the endosome. The protein resides in the multivesicular body membrane. It localises to the cytoplasmic vesicle membrane. Its subcellular location is the late endosome membrane. The protein localises to the lysosome membrane. The catalysed reaction is a 1,2-diacyl-sn-glycero-3-phospho-(1'-sn-glycerol)(in) + ATP + H2O = a 1,2-diacyl-sn-glycero-3-phospho-(1'-sn-glycerol)(out) + ADP + phosphate + H(+). The enzyme catalyses a 1,2-diacyl-sn-glycero-3-phosphocholine(in) + ATP + H2O = a 1,2-diacyl-sn-glycero-3-phosphocholine(out) + ADP + phosphate + H(+). It catalyses the reaction ATP + H2O + phospholipidSide 1 = ADP + phosphate + phospholipidSide 2.. It carries out the reaction ATP + H2O + xenobioticSide 1 = ADP + phosphate + xenobioticSide 2.. The catalysed reaction is 1,2-dihexadecanoyl-sn-glycero-3-phosphocholine(in) + ATP + H2O = 1,2-dihexadecanoyl-sn-glycero-3-phosphocholine(out) + ADP + phosphate + H(+). The enzyme catalyses cholesterol(in) + ATP + H2O = cholesterol(out) + ADP + phosphate + H(+). In terms of biological role, catalyzes the ATP-dependent transport of phospholipids such as phosphatidylcholine and phosphoglycerol from the cytoplasm into the lumen side of lamellar bodies, in turn participates in the lamellar bodies biogenesis and homeostasis of pulmonary surfactant. Transports preferentially phosphatidylcholine containing short acyl chains. In addition plays a role as an efflux transporter of miltefosine across macrophage membranes and free cholesterol (FC) through intralumenal vesicles by removing FC from the cell as a component of surfactant and protects cells from free cholesterol toxicity. The polypeptide is Phospholipid-transporting ATPase ABCA3 (Abca3) (Mus musculus (Mouse)).